The chain runs to 208 residues: Glutathione S-transferase 1 (208 aa).

Positions 1 to 80 (MDFYYLPGSA…YLVEKYGKTD (80 aa)) constitute a GST N-terminal domain. Glutathione-binding positions include S9, 50–52 (HTI), and 64–66 (ESR). Residues 86-207 (CPKKRAVINQ…AGCLEFKKYF (122 aa)) form the GST C-terminal domain.

It belongs to the GST superfamily. Theta family. As to quaternary structure, homodimer.

The enzyme catalyses RX + glutathione = an S-substituted glutathione + a halide anion + H(+). Conjugation of reduced glutathione to a wide number of exogenous and endogenous hydrophobic electrophiles. This is Glutathione S-transferase 1 (Gst1) from Musca domestica (House fly).